The following is a 720-amino-acid chain: Ciliated left-right organizer metallopeptidase (720 aa).

The N-terminal stretch at 1 to 25 (MTVSFSMFQIYRLVWLSFMTSMCLS) is a signal peptide. The Extracellular portion of the chain corresponds to 26 to 668 (ACIHDSVLQE…ALYVSHMLYS (643 aa)). His243 provides a ligand contact to Zn(2+). Glu244 is an active-site residue. Zn(2+)-binding residues include His247 and His322. Residues 669-689 (YVIGGGCCAVCGAAIIFALFW) form a helical membrane-spanning segment. The Cytoplasmic segment spans residues 690 to 720 (YKLRRQFLRVGSSYPPETSNHERPQIPADLV).

This sequence belongs to the peptidase M8 family. The cofactor is Zn(2+).

The protein resides in the membrane. Putative metalloprotease playing a role in the process of LR patterning. The sequence is that of Ciliated left-right organizer metallopeptidase (cirop) from Xenopus laevis (African clawed frog).